Here is a 1052-residue protein sequence, read N- to C-terminus: Suppressor of RPS4-RLD 1 (1052 aa).

Residue A2 is modified to N-acetylalanine. 2 TPR repeats span residues 39–72 (ILDI…EPFA) and 74–106 (QAFI…ALQQ). Positions 107–136 (TADVKQLLELEELLKDARREIDGILKSHAT) form a coiled coil. The segment at 131 to 181 (LKSHATESPQETPAYHSEKSDEKSDKLDNHESGASSNGNSHESSSELGEQS) is disordered. The span at 146-161 (HSEKSDEKSDKLDNHE) shows a compositional bias: basic and acidic residues. Over residues 162–181 (SGASSNGNSHESSSELGEQS) the composition is skewed to low complexity. TPR repeat units lie at residues 297–330 (VDFR…EPTY), 331–364 (PEAL…NPAA), 365–398 (SEAW…EPNS), 400–432 (DVLH…EKDN), 433–466 (KSAY…DSNY), 468–500 (EAWL…DNRV), 502–534 (KAYH…ENTI), 535–567 (ECLY…ELDA), and 569–591 (EKFV…ASKV). Residues 704–739 (STKGTTKNGKKNRRRERTNILSQNRGGAGCSSSSFS) are disordered. The chain crosses the membrane as a helical span at residues 966-986 (GTAVTGFVVLLGLLLAANMEF).

Multimer. Interacts with EDS1. Interacts with SNC1 and RPS4. Interacts (via TPR domain) with SGT1 (via TPR domain). Interacts with the TCP transcription factors TCP8, TCP14, TCP15, TCP20, TCP22 and TCP23. Ubiquitous. Not detected in very young flowers and older siliques.

It localises to the nucleus. The protein resides in the cytoplasm. Its subcellular location is the perinuclear region. The protein localises to the membrane. It is found in the microsome. Negative regulator of effector-triggered immunity associated with the EDS1 resistance pathway. May localize its interactors to a microsomal membrane. May therefore negatively regulate RPS4 and SNC1 translocation to the nucleus. Contributes to the regulation of RPS2 and RPS4 protein levels and negatively regulates SNC1 stability. This Arabidopsis thaliana (Mouse-ear cress) protein is Suppressor of RPS4-RLD 1.